We begin with the raw amino-acid sequence, 644 residues long: DNA mismatch repair protein MutL (644 aa).

2 disordered regions span residues 353–399 (SESG…SQLT) and 420–440 (GSMAVPRESRSGPTGESRARA). Residues 370–381 (SPESKTHSTWNE) are compositionally biased toward polar residues. The segment covering 383 to 399 (SRVDTSRVEISRDSQLT) has biased composition (basic and acidic residues).

Belongs to the DNA mismatch repair MutL/HexB family.

Its function is as follows. This protein is involved in the repair of mismatches in DNA. It is required for dam-dependent methyl-directed DNA mismatch repair. May act as a 'molecular matchmaker', a protein that promotes the formation of a stable complex between two or more DNA-binding proteins in an ATP-dependent manner without itself being part of a final effector complex. This Shewanella sp. (strain MR-4) protein is DNA mismatch repair protein MutL.